A 413-amino-acid polypeptide reads, in one-letter code: Gamma-glutamyl phosphate reductase (413 aa).

The protein belongs to the gamma-glutamyl phosphate reductase family.

Its subcellular location is the cytoplasm. It carries out the reaction L-glutamate 5-semialdehyde + phosphate + NADP(+) = L-glutamyl 5-phosphate + NADPH + H(+). Its pathway is amino-acid biosynthesis; L-proline biosynthesis; L-glutamate 5-semialdehyde from L-glutamate: step 2/2. In terms of biological role, catalyzes the NADPH-dependent reduction of L-glutamate 5-phosphate into L-glutamate 5-semialdehyde and phosphate. The product spontaneously undergoes cyclization to form 1-pyrroline-5-carboxylate. The protein is Gamma-glutamyl phosphate reductase of Lactococcus lactis subsp. cremoris (strain SK11).